A 41-amino-acid polypeptide reads, in one-letter code: Large ribosomal subunit protein bL36 (41 aa).

The protein belongs to the bacterial ribosomal protein bL36 family.

This Cereibacter sphaeroides (strain ATCC 17029 / ATH 2.4.9) (Rhodobacter sphaeroides) protein is Large ribosomal subunit protein bL36.